The sequence spans 517 residues: Glutamate--tRNA ligase (517 aa).

Residues 14-24 carry the 'HIGH' region motif; that stretch reads PSPTGPLHIGG. The 'KMSKS' region motif lies at 266–270; sequence KLSKR. Position 269 (Lys269) interacts with ATP.

Belongs to the class-I aminoacyl-tRNA synthetase family. Glutamate--tRNA ligase type 1 subfamily. As to quaternary structure, monomer.

The protein resides in the cytoplasm. It carries out the reaction tRNA(Glu) + L-glutamate + ATP = L-glutamyl-tRNA(Glu) + AMP + diphosphate. Its function is as follows. Catalyzes the attachment of glutamate to tRNA(Glu) in a two-step reaction: glutamate is first activated by ATP to form Glu-AMP and then transferred to the acceptor end of tRNA(Glu). The sequence is that of Glutamate--tRNA ligase from Cytophaga hutchinsonii (strain ATCC 33406 / DSM 1761 / CIP 103989 / NBRC 15051 / NCIMB 9469 / D465).